A 129-amino-acid polypeptide reads, in one-letter code: Large ribosomal subunit protein bL20 (129 aa).

Belongs to the bacterial ribosomal protein bL20 family.

Functionally, binds directly to 23S ribosomal RNA and is necessary for the in vitro assembly process of the 50S ribosomal subunit. It is not involved in the protein synthesizing functions of that subunit. This Mycolicibacterium gilvum (strain PYR-GCK) (Mycobacterium gilvum (strain PYR-GCK)) protein is Large ribosomal subunit protein bL20.